A 242-amino-acid chain; its full sequence is NAD(P)H-quinone oxidoreductase subunit K (242 aa).

Cysteine 60, cysteine 61, cysteine 125, and cysteine 156 together coordinate [4Fe-4S] cluster.

This sequence belongs to the complex I 20 kDa subunit family. As to quaternary structure, NDH-1 can be composed of about 15 different subunits; different subcomplexes with different compositions have been identified which probably have different functions. The cofactor is [4Fe-4S] cluster.

The protein localises to the cellular thylakoid membrane. The catalysed reaction is a plastoquinone + NADH + (n+1) H(+)(in) = a plastoquinol + NAD(+) + n H(+)(out). The enzyme catalyses a plastoquinone + NADPH + (n+1) H(+)(in) = a plastoquinol + NADP(+) + n H(+)(out). Its function is as follows. NDH-1 shuttles electrons from an unknown electron donor, via FMN and iron-sulfur (Fe-S) centers, to quinones in the respiratory and/or the photosynthetic chain. The immediate electron acceptor for the enzyme in this species is believed to be plastoquinone. Couples the redox reaction to proton translocation, and thus conserves the redox energy in a proton gradient. Cyanobacterial NDH-1 also plays a role in inorganic carbon-concentration. This Prochlorococcus marinus (strain SARG / CCMP1375 / SS120) protein is NAD(P)H-quinone oxidoreductase subunit K.